An 872-amino-acid chain; its full sequence is Leucine--tRNA ligase (872 aa).

The 'HIGH' region signature appears at 42 to 52 (PYPSGNLHMGH). Residues 631–635 (KMSKS) carry the 'KMSKS' region motif. An ATP-binding site is contributed by lysine 634.

The protein belongs to the class-I aminoacyl-tRNA synthetase family.

It is found in the cytoplasm. It carries out the reaction tRNA(Leu) + L-leucine + ATP = L-leucyl-tRNA(Leu) + AMP + diphosphate. In Blochmanniella pennsylvanica (strain BPEN), this protein is Leucine--tRNA ligase.